The following is a 272-amino-acid chain: tRNA pseudouridine synthase B (272 aa).

Catalysis depends on aspartate 38, which acts as the Nucleophile.

The protein belongs to the pseudouridine synthase TruB family. Type 1 subfamily.

It carries out the reaction uridine(55) in tRNA = pseudouridine(55) in tRNA. In terms of biological role, responsible for synthesis of pseudouridine from uracil-55 in the psi GC loop of transfer RNAs. This is tRNA pseudouridine synthase B from Campylobacter jejuni subsp. jejuni serotype O:2 (strain ATCC 700819 / NCTC 11168).